A 234-amino-acid chain; its full sequence is Large ribosomal subunit protein eL6 (234 aa).

This sequence belongs to the eukaryotic ribosomal protein eL6 family.

The protein is Large ribosomal subunit protein eL6 (RPL6) of Mesembryanthemum crystallinum (Common ice plant).